The sequence spans 947 residues: Protein translocase subunit SecA (947 aa).

ATP contacts are provided by residues Gln87, 105-109 (GEGKT), and Asp494. The tract at residues 860–947 (TAPKPLPTQE…NRAPKSKRKR (88 aa)) is disordered. The span at 870–885 (AAARTTGTAAPTALRA) shows a compositional bias: low complexity. 2 stretches are compositionally biased toward basic and acidic residues: residues 903 to 914 (EDGKAKATRDSA) and 922 to 931 (ASRRERREAA).

It belongs to the SecA family. In terms of assembly, monomer and homodimer. Part of the essential Sec protein translocation apparatus which comprises SecA, SecYEG and auxiliary proteins SecDF. Other proteins may also be involved.

Its subcellular location is the cell membrane. It localises to the cytoplasm. It carries out the reaction ATP + H2O + cellular proteinSide 1 = ADP + phosphate + cellular proteinSide 2.. Its function is as follows. Part of the Sec protein translocase complex. Interacts with the SecYEG preprotein conducting channel. Has a central role in coupling the hydrolysis of ATP to the transfer of proteins into and across the cell membrane, serving as an ATP-driven molecular motor driving the stepwise translocation of polypeptide chains across the membrane. The polypeptide is Protein translocase subunit SecA (Rhodococcus erythropolis (strain PR4 / NBRC 100887)).